The sequence spans 201 residues: Glutathione peroxidase 1 (201 aa).

Phosphoserine occurs at positions 7 and 32. Sec47 is a catalytic residue. Residue Sec47 is a non-standard amino acid, selenocysteine. 3 positions are modified to N6-acetyllysine; alternate: Lys62, Lys86, and Lys112. 3 positions are modified to N6-succinyllysine; alternate: Lys62, Lys86, and Lys112. Lys119 carries the N6-acetyllysine modification. Lys146 carries the N6-acetyllysine; alternate modification. An N6-succinyllysine; alternate modification is found at Lys146. Ser195 is subject to Phosphoserine.

It belongs to the glutathione peroxidase family. As to quaternary structure, homotetramer. Interacts with MIEN1. Post-translationally, during periods of oxidative stress, Sec-47 may react with a superoxide radical, irreversibly lose hydroselenide and be converted to dehydroalanine. In terms of tissue distribution, expressed in liver, kidney, lung, brain and heart.

The protein resides in the cytoplasm. It localises to the mitochondrion. The enzyme catalyses 2 glutathione + H2O2 = glutathione disulfide + 2 H2O. It catalyses the reaction a hydroperoxy polyunsaturated fatty acid + 2 glutathione = a hydroxy polyunsaturated fatty acid + glutathione disulfide + H2O. It carries out the reaction tert-butyl hydroperoxide + 2 glutathione = tert-butanol + glutathione disulfide + H2O. The catalysed reaction is cumene hydroperoxide + 2 glutathione = 2-phenylpropan-2-ol + glutathione disulfide + H2O. The enzyme catalyses (13S)-hydroperoxy-(9Z,11E)-octadecadienoate + 2 glutathione = (13S)-hydroxy-(9Z,11E)-octadecadienoate + glutathione disulfide + H2O. It catalyses the reaction (9S)-hydroperoxy-(10E,12Z)-octadecadienoate + 2 glutathione = (9S)-hydroxy-(10E,12Z)-octadecadienoate + glutathione disulfide + H2O. It carries out the reaction (5S)-hydroperoxy-(6E,8Z,11Z,14Z)-eicosatetraenoate + 2 glutathione = (5S)-hydroxy-(6E,8Z,11Z,14Z)-eicosatetraenoate + glutathione disulfide + H2O. The catalysed reaction is (12S)-hydroperoxy-(5Z,8Z,10E,14Z)-eicosatetraenoate + 2 glutathione = (12S)-hydroxy-(5Z,8Z,10E,14Z)-eicosatetraenoate + glutathione disulfide + H2O. The enzyme catalyses (12R)-hydroperoxy-(5Z,8Z,10E,14Z)-eicosatetraenoate + 2 glutathione = (12R)-hydroxy-(5Z,8Z,10E,14Z)-eicosatetraenoate + glutathione disulfide + H2O. It catalyses the reaction (15S)-hydroperoxy-(5Z,8Z,11Z,13E)-eicosatetraenoate + 2 glutathione = (15S)-hydroxy-(5Z,8Z,11Z,13E)-eicosatetraenoate + glutathione disulfide + H2O. It carries out the reaction (5S)-hydroperoxy-(6E,8Z,11Z,14Z,17Z)-eicosapentaenoate + 2 glutathione = (5S)-hydroxy-(6E,8Z,11Z,14Z,17Z)-eicosapentaenoate + glutathione disulfide + H2O. The catalysed reaction is (12S)-hydroperoxy-(5Z,8Z,10E,14Z,17Z)-eicosapentaenoate + 2 glutathione = (12S)-hydroxy-(5Z,8Z,10E,14Z,17Z)-eicosapentaenoate + glutathione disulfide + H2O. The enzyme catalyses (15S)-hydroperoxy-(5Z,8Z,11Z,13E,17Z)-eicosapentaenoate + 2 glutathione = (15S)-hydroxy-(5Z,8Z,11Z,13E,17Z)-eicosapentaenoate + glutathione disulfide + H2O. It catalyses the reaction (15S)-hydroperoxy-(11Z,13E)-eicosadienoate + 2 glutathione = (15S)-hydroxy-(11Z,13E)-eicosadienoate + glutathione disulfide + H2O. It carries out the reaction (17S)-hydroperoxy-(4Z,7Z,10Z,13Z,15E,19Z)-docosahexaenoate + 2 glutathione = (17S)-hydroxy-(4Z,7Z,10Z,13Z,15E,19Z)-docosahexaenoate + glutathione disulfide + H2O. Catalyzes the reduction of hydroperoxides in a glutathione-dependent manner thus regulating cellular redox homeostasis. Can reduce small soluble hydroperoxides such as H2O2, cumene hydroperoxide and tert-butyl hydroperoxide, as well as several fatty acid-derived hydroperoxides. In platelets catalyzes the reduction of 12-hydroperoxyeicosatetraenoic acid, the primary product of the arachidonate 12-lipoxygenase pathway. The protein is Glutathione peroxidase 1 of Mus musculus (Mouse).